A 158-amino-acid polypeptide reads, in one-letter code: 2-C-methyl-D-erythritol 2,4-cyclodiphosphate synthase (158 aa).

Residues D9 and H11 each contribute to the a divalent metal cation site. Residues D9 to H11 and H35 to S36 each bind 4-CDP-2-C-methyl-D-erythritol 2-phosphate. An a divalent metal cation-binding site is contributed by H43. Residues D57–G59 and R143 each bind 4-CDP-2-C-methyl-D-erythritol 2-phosphate.

This sequence belongs to the IspF family. As to quaternary structure, homotrimer. It depends on a divalent metal cation as a cofactor.

It carries out the reaction 4-CDP-2-C-methyl-D-erythritol 2-phosphate = 2-C-methyl-D-erythritol 2,4-cyclic diphosphate + CMP. Its pathway is isoprenoid biosynthesis; isopentenyl diphosphate biosynthesis via DXP pathway; isopentenyl diphosphate from 1-deoxy-D-xylulose 5-phosphate: step 4/6. Functionally, involved in the biosynthesis of isopentenyl diphosphate (IPP) and dimethylallyl diphosphate (DMAPP), two major building blocks of isoprenoid compounds. Catalyzes the conversion of 4-diphosphocytidyl-2-C-methyl-D-erythritol 2-phosphate (CDP-ME2P) to 2-C-methyl-D-erythritol 2,4-cyclodiphosphate (ME-CPP) with a corresponding release of cytidine 5-monophosphate (CMP). In Chromobacterium violaceum (strain ATCC 12472 / DSM 30191 / JCM 1249 / CCUG 213 / NBRC 12614 / NCIMB 9131 / NCTC 9757 / MK), this protein is 2-C-methyl-D-erythritol 2,4-cyclodiphosphate synthase.